Here is a 294-residue protein sequence, read N- to C-terminus: MSVISMKNLLETGVHFGHQTRKWNPKMAPYVFTARNGIHIIDLQKTVQKAKEAYDALKKLTSEGKKVLFVGTKKQARGAIEREAIRSNMFFINNRWPGGLLTNWNTVKRSIARLKKLEGMEADNSFEKEVKTKKEVLTLRRELEKLRKTLGGIKDMATIPEIMFVIDPKKEEIAVKEARKLGLKIFAVVDTNCDPELIDYPIPGNDDAIRAISLFLETMSNAVIEGTGGVVEQPRFSEDLDSEALALEYQGEYDESGKFIMDEDPDSKKTKTAEEPSATIEPSTTTTVEVDQNE.

Residues 256–274 (SGKFIMDEDPDSKKTKTAE) show a composition bias toward basic and acidic residues. The segment at 256-294 (SGKFIMDEDPDSKKTKTAEEPSATIEPSTTTTVEVDQNE) is disordered. Residues 280-294 (IEPSTTTTVEVDQNE) show a composition bias toward polar residues.

The protein belongs to the universal ribosomal protein uS2 family.

This chain is Small ribosomal subunit protein uS2, found in Leptospira interrogans serogroup Icterohaemorrhagiae serovar Lai (strain 56601).